We begin with the raw amino-acid sequence, 529 residues long: ATP synthase F(1) complex subunit beta, mitochondrial (529 aa).

A mitochondrion-targeting transit peptide spans 1 to 47 (MLGFVGRVAAAPASGALRRLTPSASLPPAQLLLRAAPTAVHPVRDYA). A glycan (O-linked (GlcNAc) serine) is linked at S106. N6-acetyllysine; alternate is present on residues K124, K133, and K161. 3 positions are modified to N6-succinyllysine; alternate: K124, K133, and K161. Residue K198 is modified to N6-acetyllysine. Residues G209, V210, G211, K212, T213, and V214 each coordinate ADP. G209 is a binding site for ATP. Phosphate contacts are provided by G209, V210, G211, K212, and T213. Residues G211, K212, T213, and V214 each coordinate ATP. Mg(2+) is bound at residue T213. Position 238 (E238) interacts with Mg(2+). R239 provides a ligand contact to ATP. K259 and K264 each carry N6-acetyllysine; alternate. 2 positions are modified to N6-succinyllysine; alternate: K259 and K264. Phosphothreonine is present on T312. A Phosphoserine modification is found at S415. N6-acetyllysine is present on K426. Residue S433 is modified to Phosphoserine. N6-acetyllysine is present on residues K480 and K485. K522 carries the post-translational modification N6-acetyllysine; alternate. K522 bears the N6-succinyllysine; alternate mark. At S529 the chain carries Phosphoserine.

Belongs to the ATPase alpha/beta chains family. As to quaternary structure, homotrimer. Component of the ATP synthase complex composed at least of ATP5F1A/subunit alpha, ATP5F1B/subunit beta, ATP5MC1/subunit c (homooctomer), MT-ATP6/subunit a, MT-ATP8/subunit 8, ATP5ME/subunit e, ATP5MF/subunit f, ATP5MG/subunit g, ATP5MK/subunit k, ATP5MJ/subunit j, ATP5F1C/subunit gamma, ATP5F1D/subunit delta, ATP5F1E/subunit epsilon, ATP5PF/subunit F6, ATP5PB/subunit b, ATP5PD/subunit d, ATP5PO/subunit OSCP. ATP synthase complex consists of a soluble F(1) head domain (subunits alpha(3) and beta(3)) - the catalytic core - and a membrane F(0) domain - the membrane proton channel (subunits c, a, 8, e, f, g, k and j). These two domains are linked by a central stalk (subunits gamma, delta, and epsilon) rotating inside the F1 region and a stationary peripheral stalk (subunits F6, b, d, and OSCP). Interacts with PPIF. Interacts with BCL2L1 isoform BCL-X(L); the interaction mediates the association of BCL2L1 isoform BCL-X(L) with the mitochondrial membrane F(1)F(0) ATP synthase and enhances neurons metabolic efficiency. Interacts with CLN5 and PPT1. Interacts with S100A1; this interaction increases F1-ATPase activity. Interacts with MTLN. Interacts with TTC5/STRAP; the interaction results in decreased mitochondrial ATP production. Requires Mg(2+) as cofactor.

It localises to the mitochondrion inner membrane. It catalyses the reaction ATP + H2O + 4 H(+)(in) = ADP + phosphate + 5 H(+)(out). Catalytic subunit beta, of the mitochondrial membrane ATP synthase complex (F(1)F(0) ATP synthase or Complex V) that produces ATP from ADP in the presence of a proton gradient across the membrane which is generated by electron transport complexes of the respiratory chain. ATP synthase complex consist of a soluble F(1) head domain - the catalytic core - and a membrane F(1) domain - the membrane proton channel. These two domains are linked by a central stalk rotating inside the F(1) region and a stationary peripheral stalk. During catalysis, ATP synthesis in the catalytic domain of F(1) is coupled via a rotary mechanism of the central stalk subunits to proton translocation. In vivo, can only synthesize ATP although its ATP hydrolase activity can be activated artificially in vitro. With the subunit alpha (ATP5F1A), forms the catalytic core in the F(1) domain. This Homo sapiens (Human) protein is ATP synthase F(1) complex subunit beta, mitochondrial.